Reading from the N-terminus, the 66-residue chain is UPF0391 membrane protein AM1_5042 (66 aa).

2 helical membrane-spanning segments follow: residues 4–24 (LTLT…SGIA) and 28–47 (AAIA…LVWP).

This sequence belongs to the UPF0391 family.

The protein resides in the cell membrane. The polypeptide is UPF0391 membrane protein AM1_5042 (Acaryochloris marina (strain MBIC 11017)).